An 88-amino-acid polypeptide reads, in one-letter code: Large ribosomal subunit protein bL27 (88 aa).

Belongs to the bacterial ribosomal protein bL27 family.

The chain is Large ribosomal subunit protein bL27 from Carboxydothermus hydrogenoformans (strain ATCC BAA-161 / DSM 6008 / Z-2901).